A 367-amino-acid chain; its full sequence is ADP-ribosylhydrolase ARH3 (367 aa).

Mg(2+) is bound by residues glutamate 41, threonine 79, aspartate 80, and aspartate 81. Aspartate 80 is a binding site for substrate. Substrate contacts are provided by residues 149-155, histidine 185, leucine 238, and isoleucine 274; that span reads KGSYGNG. Residues aspartate 317 and threonine 320 each contribute to the Mg(2+) site.

The protein belongs to the ADP-ribosylglycohydrolase family. In terms of assembly, monomer. Requires Mg(2+) as cofactor.

Its subcellular location is the nucleus. It is found in the cytoplasm. The protein resides in the chromosome. It localises to the mitochondrion matrix. The enzyme catalyses [(1''-&gt;2')-ADP-alpha-D-ribose](n) + H2O = [(1''-&gt;2')-ADP-alpha-D-ribose](n-1) + ADP-D-ribose. It carries out the reaction 1''-O-acetyl-ADP-alpha-D-ribose + H2O = ADP-D-ribose + acetate + H(+). The catalysed reaction is O-(ADP-D-ribosyl)-L-seryl-[protein] + H2O = ADP-D-ribose + L-seryl-[protein]. It catalyses the reaction alpha-NAD(+) + H2O = ADP-D-ribose + nicotinamide + H(+). Its activity is regulated as follows. The protein undergoes a dramatic conformational switch from closed to open states upon substrate-binding, which enables specific substrate recognition for the 1''-O-linkage. The glutamate flap (Glu-41) blocks substrate entrance to Mg(2+) in the unliganded closed state. In presence of substrate, Glu-41 is ejected from the active site: this closed-to-open transition significantly widens the substrate-binding channel and precisely positions the scissile 1''-O-linkage for cleavage while securing tightly 2'- and 3'-hydroxyls of ADP-ribose. In terms of biological role, ADP-ribosylhydrolase that preferentially hydrolyzes the scissile alpha-O-linkage attached to the anomeric C1'' position of ADP-ribose and acts on different substrates, such as proteins ADP-ribosylated on serine and threonine, free poly(ADP-ribose) and O-acetyl-ADP-D-ribose. Specifically acts as a serine mono-ADP-ribosylhydrolase by mediating the removal of mono-ADP-ribose attached to serine residues on proteins, thereby playing a key role in DNA damage response. Serine ADP-ribosylation of proteins constitutes the primary form of ADP-ribosylation of proteins in response to DNA damage. Does not hydrolyze ADP-ribosyl-arginine, -cysteine, -diphthamide, or -asparagine bonds. Also able to degrade protein free poly(ADP-ribose), which is synthesized in response to DNA damage: free poly(ADP-ribose) acts as a potent cell death signal and its degradation by ADPRHL2 protects cells from poly(ADP-ribose)-dependent cell death, a process named parthanatos. Also hydrolyzes free poly(ADP-ribose) in mitochondria. Specifically digests O-acetyl-ADP-D-ribose, a product of deacetylation reactions catalyzed by sirtuins. Specifically degrades 1''-O-acetyl-ADP-D-ribose isomer, rather than 2''-O-acetyl-ADP-D-ribose or 3''-O-acetyl-ADP-D-ribose isomers. In Gallus gallus (Chicken), this protein is ADP-ribosylhydrolase ARH3 (ADPRS).